The primary structure comprises 181 residues: Inner membrane-spanning protein YciB (181 aa).

5 helical membrane passes run 10–30 (LIIFFALYKFYDIYVATGALI), 50–70 (MQLITFVMVALFGGMTLALHD), 80–100 (IVYVVFALGLTISQIMGKPAI), 120–140 (WAWVMFFSGCAALNLYVAYHL), and 148–168 (FKVFGLLAATFVFTLLTGGYI).

It belongs to the YciB family.

The protein localises to the cell inner membrane. Functionally, plays a role in cell envelope biogenesis, maintenance of cell envelope integrity and membrane homeostasis. The chain is Inner membrane-spanning protein YciB from Vibrio cholerae serotype O1 (strain ATCC 39541 / Classical Ogawa 395 / O395).